The following is a 145-amino-acid chain: MIALIQRVKSASVQVDAEIVGKIDSGLLVFLGVEQQDNIEAMEKLATKVISYRIFNDENGKMNLSLKQAGGALLCVSQFTLAADTGRGLRPSFSKAATPEQANHLYEAFIDYCRLQGVETQIGRFGADMQVSLINDGPVTFNLQV.

A Gly-cisPro motif, important for rejection of L-amino acids motif is present at residues 137–138 (GP).

Belongs to the DTD family. Homodimer.

It is found in the cytoplasm. It catalyses the reaction glycyl-tRNA(Ala) + H2O = tRNA(Ala) + glycine + H(+). The catalysed reaction is a D-aminoacyl-tRNA + H2O = a tRNA + a D-alpha-amino acid + H(+). An aminoacyl-tRNA editing enzyme that deacylates mischarged D-aminoacyl-tRNAs. Also deacylates mischarged glycyl-tRNA(Ala), protecting cells against glycine mischarging by AlaRS. Acts via tRNA-based rather than protein-based catalysis; rejects L-amino acids rather than detecting D-amino acids in the active site. By recycling D-aminoacyl-tRNA to D-amino acids and free tRNA molecules, this enzyme counteracts the toxicity associated with the formation of D-aminoacyl-tRNA entities in vivo and helps enforce protein L-homochirality. The chain is D-aminoacyl-tRNA deacylase from Shewanella denitrificans (strain OS217 / ATCC BAA-1090 / DSM 15013).